The chain runs to 358 residues: Protein RecA (358 aa).

ATP is bound at residue 76–83 (GPESSGKT).

It belongs to the RecA family.

Its subcellular location is the cytoplasm. Functionally, can catalyze the hydrolysis of ATP in the presence of single-stranded DNA, the ATP-dependent uptake of single-stranded DNA by duplex DNA, and the ATP-dependent hybridization of homologous single-stranded DNAs. It interacts with LexA causing its activation and leading to its autocatalytic cleavage. The polypeptide is Protein RecA (Rhodospirillum centenum (strain ATCC 51521 / SW)).